Reading from the N-terminus, the 724-residue chain is 1,4-alpha-glucan branching enzyme GlgB 1 (724 aa).

Asp-403 functions as the Nucleophile in the catalytic mechanism. The active-site Proton donor is Glu-456.

It belongs to the glycosyl hydrolase 13 family. GlgB subfamily. As to quaternary structure, monomer.

It catalyses the reaction Transfers a segment of a (1-&gt;4)-alpha-D-glucan chain to a primary hydroxy group in a similar glucan chain.. It functions in the pathway glycan biosynthesis; glycogen biosynthesis. Its function is as follows. Catalyzes the formation of the alpha-1,6-glucosidic linkages in glycogen by scission of a 1,4-alpha-linked oligosaccharide from growing alpha-1,4-glucan chains and the subsequent attachment of the oligosaccharide to the alpha-1,6 position. This Xanthomonas campestris pv. campestris (strain 8004) protein is 1,4-alpha-glucan branching enzyme GlgB 1.